The chain runs to 224 residues: Uridylate kinase (224 aa).

9–10 serves as a coordination point for ATP; the sequence is GS. UMP is bound at residue Gly-43. Gly-44 and Arg-48 together coordinate ATP. UMP contacts are provided by residues Asp-65 and 113 to 119; that span reads TEPAHST. Residues Thr-139, Tyr-145, and Asp-148 each contribute to the ATP site.

It belongs to the UMP kinase family. As to quaternary structure, homohexamer.

Its subcellular location is the cytoplasm. It catalyses the reaction UMP + ATP = UDP + ADP. It functions in the pathway pyrimidine metabolism; CTP biosynthesis via de novo pathway; UDP from UMP (UMPK route): step 1/1. With respect to regulation, inhibited by UTP. In terms of biological role, catalyzes the reversible phosphorylation of UMP to UDP. This is Uridylate kinase from Methanothermobacter thermautotrophicus (strain ATCC 29096 / DSM 1053 / JCM 10044 / NBRC 100330 / Delta H) (Methanobacterium thermoautotrophicum).